A 130-amino-acid polypeptide reads, in one-letter code: Small ribosomal subunit protein uS11 (130 aa).

The protein belongs to the universal ribosomal protein uS11 family. Part of the 30S ribosomal subunit. Interacts with proteins S7 and S18. Binds to IF-3.

Located on the platform of the 30S subunit, it bridges several disparate RNA helices of the 16S rRNA. Forms part of the Shine-Dalgarno cleft in the 70S ribosome. This is Small ribosomal subunit protein uS11 from Acidiphilium cryptum (strain JF-5).